The primary structure comprises 178 residues: UPF0114 protein in repA1-repA2 intergenic region (178 aa).

3 consecutive transmembrane segments (helical) span residues 14–34 (WLIFPIYLGLSFCLILLTLKF), 53–73 (LILVILSLIDIVLVGGLLVMV), and 136–156 (WYVIIHLTFVVSAGGMAYIDR).

Belongs to the UPF0114 family.

Its subcellular location is the cell membrane. The protein is UPF0114 protein in repA1-repA2 intergenic region of Buchnera aphidicola subsp. Tetraneura caerulescens.